Reading from the N-terminus, the 266-residue chain is Imidazole glycerol phosphate synthase subunit HisF (266 aa).

Active-site residues include aspartate 11 and aspartate 130. The segment at 134 to 157 (RTPEEAARPGPDGAPRGEGWDVYS) is disordered.

Belongs to the HisA/HisF family. Heterodimer of HisH and HisF.

Its subcellular location is the cytoplasm. It catalyses the reaction 5-[(5-phospho-1-deoxy-D-ribulos-1-ylimino)methylamino]-1-(5-phospho-beta-D-ribosyl)imidazole-4-carboxamide + L-glutamine = D-erythro-1-(imidazol-4-yl)glycerol 3-phosphate + 5-amino-1-(5-phospho-beta-D-ribosyl)imidazole-4-carboxamide + L-glutamate + H(+). It functions in the pathway amino-acid biosynthesis; L-histidine biosynthesis; L-histidine from 5-phospho-alpha-D-ribose 1-diphosphate: step 5/9. In terms of biological role, IGPS catalyzes the conversion of PRFAR and glutamine to IGP, AICAR and glutamate. The HisF subunit catalyzes the cyclization activity that produces IGP and AICAR from PRFAR using the ammonia provided by the HisH subunit. The polypeptide is Imidazole glycerol phosphate synthase subunit HisF (Paracidovorax citrulli (strain AAC00-1) (Acidovorax citrulli)).